The following is a 415-amino-acid chain: Transcription termination factor Rho (415 aa).

One can recognise a Rho RNA-BD domain in the interval 52–119 (ADIASGVLDI…TDVVRVNGRT (68 aa)). Residues 161-166 (GKGQRG), 173-178 (KTGKTV), and R204 each bind ATP.

The protein belongs to the Rho family. In terms of assembly, homohexamer. The homohexamer assembles into an open ring structure.

Its function is as follows. Facilitates transcription termination by a mechanism that involves Rho binding to the nascent RNA, activation of Rho's RNA-dependent ATPase activity, and release of the mRNA from the DNA template. The sequence is that of Transcription termination factor Rho from Streptomyces coelicolor (strain ATCC BAA-471 / A3(2) / M145).